The sequence spans 191 residues: MTRVVLSIGSNLGDRLAWLQSAVDGLGDAVVAVSPVYDTVPWGAVEQRSFLNAVVIADGPAYDTKAWLCRAQELERNAGRVRGQRWGARTLDVDLISCYQTSGATTGAVEVITCESNLTLPHPRAHLRAFVLVPWLAVDSDAELTVAGRAQRVDRLLAEMEPTEREGVRLTNLTLKLKRSSPARPVSPKSD.

Belongs to the HPPK family.

It carries out the reaction 6-hydroxymethyl-7,8-dihydropterin + ATP = (7,8-dihydropterin-6-yl)methyl diphosphate + AMP + H(+). It functions in the pathway cofactor biosynthesis; tetrahydrofolate biosynthesis; 2-amino-4-hydroxy-6-hydroxymethyl-7,8-dihydropteridine diphosphate from 7,8-dihydroneopterin triphosphate: step 4/4. Functionally, catalyzes the transfer of pyrophosphate from adenosine triphosphate (ATP) to 6-hydroxymethyl-7,8-dihydropterin, an enzymatic step in folate biosynthesis pathway. The protein is 2-amino-4-hydroxy-6-hydroxymethyldihydropteridine pyrophosphokinase (folK) of Mycobacterium leprae (strain TN).